The sequence spans 169 residues: 3-hydroxyacyl-[acyl-carrier-protein] dehydratase FabZ (169 aa).

The active site involves His66.

This sequence belongs to the thioester dehydratase family. FabZ subfamily.

The protein resides in the cytoplasm. It catalyses the reaction a (3R)-hydroxyacyl-[ACP] = a (2E)-enoyl-[ACP] + H2O. Functionally, involved in unsaturated fatty acids biosynthesis. Catalyzes the dehydration of short chain beta-hydroxyacyl-ACPs and long chain saturated and unsaturated beta-hydroxyacyl-ACPs. The sequence is that of 3-hydroxyacyl-[acyl-carrier-protein] dehydratase FabZ from Helicobacter hepaticus (strain ATCC 51449 / 3B1).